An 875-amino-acid polypeptide reads, in one-letter code: Alanine--tRNA ligase (875 aa).

Residues His564, His568, Cys666, and His670 each contribute to the Zn(2+) site.

The protein belongs to the class-II aminoacyl-tRNA synthetase family. In terms of assembly, homotetramer. Requires Zn(2+) as cofactor.

It localises to the cytoplasm. It catalyses the reaction tRNA(Ala) + L-alanine + ATP = L-alanyl-tRNA(Ala) + AMP + diphosphate. In terms of biological role, catalyzes the attachment of alanine to tRNA(Ala) in a two-step reaction: alanine is first activated by ATP to form Ala-AMP and then transferred to the acceptor end of tRNA(Ala). Also edits incorrectly charged Ser-tRNA(Ala) and Gly-tRNA(Ala) via its editing domain. This is Alanine--tRNA ligase from Yersinia pseudotuberculosis serotype O:1b (strain IP 31758).